We begin with the raw amino-acid sequence, 122 residues long: MTTDSVTQGVAHSVNGRLPELDFENRPSGAKLGIFDLPKLEVSVAPFTLAHIRVPGGVTTAEDHHEVREIWLVQSGSGILTLDGVRSRVRAGDTLYYESYRRHQLHNDGDSPVEIVSIWWRP.

Residues 55-119 (PGGVTTAEDH…DSPVEIVSIW (65 aa)) are cupin 2 conserved barrel. Zn(2+) is bound by residues D63, H65, E69, and H103.

Zn(2+) is required as a cofactor.

The enzyme catalyses N(6)-hydroxy-L-lysine + L-glutamate + ATP = 1-L-glutamo-2-N(6-)L-lysinohydrazine + AMP + diphosphate + 2 H(+). Its activity is regulated as follows. Inhibited by 1,10-phenanthroline (OP). Its function is as follows. Catalyzes hydrazine (N-N) bond formation from an unstable ester intermediate, the product of the ATP-dependent condensation of L-N(6)-OH-lysine and L-glutamine substrates by a methionyl-tRNA synthase-like protein. The polypeptide is Cupin 2 conserved barrel domain-containing protein (Rhodococcus jostii (strain RHA1)).